The sequence spans 488 residues: 3-octaprenyl-4-hydroxybenzoate carboxy-lyase (488 aa).

Asn-172 provides a ligand contact to Mn(2+). Residues 175 to 177 (IYR), 189 to 191 (RWL), and 194 to 195 (RG) each bind prenylated FMN. Glu-238 lines the Mn(2+) pocket. Asp-287 acts as the Proton donor in catalysis.

Belongs to the UbiD family. In terms of assembly, homohexamer. The cofactor is prenylated FMN. It depends on Mn(2+) as a cofactor.

The protein localises to the cell membrane. It catalyses the reaction a 4-hydroxy-3-(all-trans-polyprenyl)benzoate + H(+) = a 2-(all-trans-polyprenyl)phenol + CO2. Its pathway is cofactor biosynthesis; ubiquinone biosynthesis. In terms of biological role, catalyzes the decarboxylation of 3-octaprenyl-4-hydroxy benzoate to 2-octaprenylphenol, an intermediate step in ubiquinone biosynthesis. This Pseudomonas savastanoi pv. phaseolicola (strain 1448A / Race 6) (Pseudomonas syringae pv. phaseolicola (strain 1448A / Race 6)) protein is 3-octaprenyl-4-hydroxybenzoate carboxy-lyase.